The primary structure comprises 113 residues: MHEMALCESMIEIIEREARDQHFARVRAVWVEIGALSHVEPEAMRFCFSAVAHGGIAADARFEIVSVSGAAWCMSCSKTVPLAQRSAPCPDCGGYQLQVTAGDELRVKELEVD.

Histidine 2 contributes to the Ni(2+) binding site. Zn(2+) is bound by residues cysteine 73, cysteine 76, cysteine 89, and cysteine 92.

It belongs to the HypA/HybF family.

Functionally, involved in the maturation of [NiFe] hydrogenases. Required for nickel insertion into the metal center of the hydrogenase. This chain is Hydrogenase maturation factor HypA, found in Rhodopseudomonas palustris (strain BisB5).